The sequence spans 679 residues: DNA ligase (679 aa).

NAD(+)-binding positions include 32–36 (DTLYD), 81–82 (SL), and Glu-115. Catalysis depends on Lys-117, which acts as the N6-AMP-lysine intermediate. NAD(+) contacts are provided by Arg-138, Glu-175, Lys-293, and Lys-317. Positions 411, 414, 429, and 434 each coordinate Zn(2+). Positions 601–679 (NSSGALLGKT…EAELQKLLST (79 aa)) constitute a BRCT domain.

This sequence belongs to the NAD-dependent DNA ligase family. LigA subfamily. Mg(2+) serves as cofactor. Mn(2+) is required as a cofactor.

The catalysed reaction is NAD(+) + (deoxyribonucleotide)n-3'-hydroxyl + 5'-phospho-(deoxyribonucleotide)m = (deoxyribonucleotide)n+m + AMP + beta-nicotinamide D-nucleotide.. Its function is as follows. DNA ligase that catalyzes the formation of phosphodiester linkages between 5'-phosphoryl and 3'-hydroxyl groups in double-stranded DNA using NAD as a coenzyme and as the energy source for the reaction. It is essential for DNA replication and repair of damaged DNA. The protein is DNA ligase of Parasynechococcus marenigrum (strain WH8102).